A 338-amino-acid chain; its full sequence is Nicotinate-nucleotide--dimethylbenzimidazole phosphoribosyltransferase (338 aa).

The active-site Proton acceptor is the glutamate 305.

Belongs to the CobT family.

The enzyme catalyses 5,6-dimethylbenzimidazole + nicotinate beta-D-ribonucleotide = alpha-ribazole 5'-phosphate + nicotinate + H(+). It functions in the pathway nucleoside biosynthesis; alpha-ribazole biosynthesis; alpha-ribazole from 5,6-dimethylbenzimidazole: step 1/2. In terms of biological role, catalyzes the synthesis of alpha-ribazole-5'-phosphate from nicotinate mononucleotide (NAMN) and 5,6-dimethylbenzimidazole (DMB). This Rhizobium meliloti (strain 1021) (Ensifer meliloti) protein is Nicotinate-nucleotide--dimethylbenzimidazole phosphoribosyltransferase.